A 264-amino-acid polypeptide reads, in one-letter code: Thiazole synthase (264 aa).

The active-site Schiff-base intermediate with DXP is the Lys106. 1-deoxy-D-xylulose 5-phosphate-binding positions include Gly167, 193 to 194 (AG), and 215 to 216 (NS).

Belongs to the ThiG family. Homotetramer. Forms heterodimers with either ThiH or ThiS.

The protein resides in the cytoplasm. It carries out the reaction [ThiS sulfur-carrier protein]-C-terminal-Gly-aminoethanethioate + 2-iminoacetate + 1-deoxy-D-xylulose 5-phosphate = [ThiS sulfur-carrier protein]-C-terminal Gly-Gly + 2-[(2R,5Z)-2-carboxy-4-methylthiazol-5(2H)-ylidene]ethyl phosphate + 2 H2O + H(+). The protein operates within cofactor biosynthesis; thiamine diphosphate biosynthesis. Catalyzes the rearrangement of 1-deoxy-D-xylulose 5-phosphate (DXP) to produce the thiazole phosphate moiety of thiamine. Sulfur is provided by the thiocarboxylate moiety of the carrier protein ThiS. In vitro, sulfur can be provided by H(2)S. In Prochlorococcus marinus (strain MIT 9215), this protein is Thiazole synthase.